Here is an 85-residue protein sequence, read N- to C-terminus: U4-theraphotoxin-Hhn1c (85 aa).

An N-terminal signal peptide occupies residues 1–22 (MKVTLIAIVTCAAVLVLHTTAA). Positions 23-48 (EELEAESQLMEVGMPDTELAAVDEER) are excised as a propeptide. Cystine bridges form between Cys52/Cys66, Cys56/Cys77, and Cys71/Cys82.

This sequence belongs to the neurotoxin 12 (Hwtx-2) family. 02 (Hwtx-2) subfamily. Expressed by the venom gland.

It is found in the secreted. Postsynaptic neurotoxin. This is U4-theraphotoxin-Hhn1c from Cyriopagopus hainanus (Chinese bird spider).